A 540-amino-acid chain; its full sequence is NAD(P)H-quinone oxidoreductase subunit 2 B, chloroplastic (540 aa).

13 helical membrane passes run 24-44 (LLLF…GLIL), 57-77 (IPWL…ALLF), 99-119 (IFQF…VEYI), 124-144 (MAIT…MFLC), 149-169 (FITI…LSGY), 183-203 (YLLM…WLYG), 227-247 (PGIS…LSPA), 325-345 (WHLL…LIAI), 353-373 (MLAY…IVGD), 384-404 (YMLF…LFGL), 425-445 (ALSL…AGFF), 448-468 (LYLF…IGLL), and 514-534 (MIVC…IIAI).

The protein belongs to the complex I subunit 2 family. As to quaternary structure, NDH is composed of at least 16 different subunits, 5 of which are encoded in the nucleus.

It is found in the plastid. The protein localises to the chloroplast thylakoid membrane. It carries out the reaction a plastoquinone + NADH + (n+1) H(+)(in) = a plastoquinol + NAD(+) + n H(+)(out). The catalysed reaction is a plastoquinone + NADPH + (n+1) H(+)(in) = a plastoquinol + NADP(+) + n H(+)(out). NDH shuttles electrons from NAD(P)H:plastoquinone, via FMN and iron-sulfur (Fe-S) centers, to quinones in the photosynthetic chain and possibly in a chloroplast respiratory chain. The immediate electron acceptor for the enzyme in this species is believed to be plastoquinone. Couples the redox reaction to proton translocation, and thus conserves the redox energy in a proton gradient. The protein is NAD(P)H-quinone oxidoreductase subunit 2 B, chloroplastic of Coffea arabica (Arabian coffee).